Here is a 169-residue protein sequence, read N- to C-terminus: MTSPSSSFWNTASREAMKSGMFVAKVYCFLHVTTNYLGFMAYAYGPSMIPTLHPSGNMLLAERISKRYQKPSRGDIVVIRSPENPNKTPIKRVVGVEGDCISFVIDPVKSDESQTIVVPKGHVFVQGDYTHNSRDSRNFGPVPYGLIQGRVLWRVWPFQDFGPLGPTPT.

Catalysis depends on residues Ser47 and Lys91.

The protein belongs to the peptidase S26 family. IMP1 subfamily. Heterodimer of 2 subunits, IMP1A/B and IMP12.

It is found in the mitochondrion inner membrane. In terms of biological role, catalyzes the removal of transit peptides required for the targeting of proteins from the mitochondrial matrix, across the inner membrane, into the inter-membrane space. The protein is Mitochondrial ATP-independent inner membrane protease subunit 1b of Arabidopsis thaliana (Mouse-ear cress).